Consider the following 182-residue polypeptide: Guanylate kinase (182 aa).

A Guanylate kinase-like domain is found at 2–180 (GTLTVITGPS…ALLKLEGLMG (179 aa)). 9 to 16 (GPSGVGKG) contacts ATP.

This sequence belongs to the guanylate kinase family.

The protein resides in the cytoplasm. It carries out the reaction GMP + ATP = GDP + ADP. The enzyme catalyses dZMP + ATP = dZDP + ADP. It functions in the pathway purine metabolism. Essential for recycling GMP and indirectly, cGMP. Its function is as follows. (Microbial infection) Catalyzes the phosphorylation of dZMP to dZDP, when the bacterium is infected by a phage that produces the substrate for the synthesis of dZTP (2- amino-2'-deoxyadenosine 5'-triphosphate), which is then used by the phage as a DNA polymerase substrate. In Parasynechococcus marenigrum (strain WH8102), this protein is Guanylate kinase.